The following is a 362-amino-acid chain: Prostaglandin E2 receptor EP2 subtype (362 aa).

The Extracellular portion of the chain corresponds to 1 to 24 (MDNFLNDSKLMEDCKSRQWLLSGE). The N-linked (GlcNAc...) asparagine glycan is linked to Asn6. Residues 25 to 48 (SPAISSVMFSAGVLGNLIALALLA) traverse the membrane as a helical segment. The Cytoplasmic portion of the chain corresponds to 49–66 (RRWRGDTGCSAGSRTSIS). A helical membrane pass occupies residues 67–92 (LFHVLVTELVLTDLLGTCLISPVVLA). Residues 93–112 (SYSRNQTLVALAPESHACTY) lie on the Extracellular side of the membrane. Cysteines 110 and 188 form a disulfide. A helical membrane pass occupies residues 113–133 (FAFTMTFFSLATMLMLFAMAL). The Cytoplasmic portion of the chain corresponds to 134–152 (ERYLSIGYPYFYRRHLSRR). The chain crosses the membrane as a helical span at residues 153 to 177 (GGLAVLPVIYGASLLFCSLPLLNYG). Over 178-199 (EYVQYCPGTWCFIRHGRTAYLQ) the chain is Extracellular. The helical transmembrane segment at 200–224 (LYATMLLLLIVAVLACNISVILNLI) threads the bilayer. Over 225–262 (RMHRRSRRSRCGLSGSSLRGPGSRRRGERTSMAEETDH) the chain is Cytoplasmic. The interval 234-255 (RCGLSGSSLRGPGSRRRGERTS) is disordered. A compositionally biased stretch (low complexity) spans 235 to 245 (CGLSGSSLRGP). Residues 263–286 (LILLAIMTITFAICSLPFTIFAYM) traverse the membrane as a helical segment. At 287 to 299 (DETSSLKEKWDLR) the chain is on the extracellular side. The chain crosses the membrane as a helical span at residues 300 to 323 (ALRFLSVNSIIDPWVFAILRPPVL). Residues 324–362 (RLMRSVLCCRTSLRTQEAQQTSCSTQSSASKQTDLCGQL) are Cytoplasmic-facing.

The protein belongs to the G-protein coupled receptor 1 family.

Its subcellular location is the cell membrane. Receptor for prostaglandin E2 (PGE2). The activity of this receptor is mediated by G(s) proteins that stimulate adenylate cyclase. The subsequent raise in intracellular cAMP is responsible for the relaxing effect of this receptor on smooth muscle. This Mus musculus (Mouse) protein is Prostaglandin E2 receptor EP2 subtype (Ptger2).